The chain runs to 337 residues: UDP-3-O-acylglucosamine N-acyltransferase (337 aa).

Residue histidine 238 is the Proton acceptor of the active site.

It belongs to the transferase hexapeptide repeat family. LpxD subfamily. As to quaternary structure, homotrimer.

It carries out the reaction a UDP-3-O-[(3R)-3-hydroxyacyl]-alpha-D-glucosamine + a (3R)-hydroxyacyl-[ACP] = a UDP-2-N,3-O-bis[(3R)-3-hydroxyacyl]-alpha-D-glucosamine + holo-[ACP] + H(+). The protein operates within bacterial outer membrane biogenesis; LPS lipid A biosynthesis. Functionally, catalyzes the N-acylation of UDP-3-O-acylglucosamine using 3-hydroxyacyl-ACP as the acyl donor. Is involved in the biosynthesis of lipid A, a phosphorylated glycolipid that anchors the lipopolysaccharide to the outer membrane of the cell. The sequence is that of UDP-3-O-acylglucosamine N-acyltransferase from Xanthomonas campestris pv. campestris (strain 8004).